We begin with the raw amino-acid sequence, 430 residues long: GTPase Obg (430 aa).

An Obg domain is found at 1–158 (MFVDQVKISL…LDVSLELKLL (158 aa)). The segment at 118–145 (KGGRGGRGNSRFATPRNPAPDFSEKGEP) is disordered. The OBG-type G domain occupies 159-329 (ADVGLVGFPS…LLYAIADKLE (171 aa)). GTP contacts are provided by residues 165-172 (GFPSVGKS), 190-194 (FTTIK), 212-215 (DLPG), 282-285 (NKMD), and 310-312 (STI). Mg(2+) is bound by residues Ser172 and Thr192. One can recognise an OCT domain in the interval 352–430 (KHTPSQDKFT…ILGGEFEFVE (79 aa)).

This sequence belongs to the TRAFAC class OBG-HflX-like GTPase superfamily. OBG GTPase family. As to quaternary structure, monomer. Mg(2+) serves as cofactor.

It localises to the cytoplasm. An essential GTPase which binds GTP, GDP and possibly (p)ppGpp with moderate affinity, with high nucleotide exchange rates and a fairly low GTP hydrolysis rate. Plays a role in control of the cell cycle, stress response, ribosome biogenesis and in those bacteria that undergo differentiation, in morphogenesis control. This is GTPase Obg from Staphylococcus aureus (strain MRSA252).